The following is a 305-amino-acid chain: ATP synthase subunit gamma, mitochondrial (305 aa).

Belongs to the ATPase gamma chain family. F-type ATPases have 2 components, F(1) - the catalytic core - and F(o) - the membrane proton channel. F(1) has five subunits: alpha(3), beta(3), gamma(1), delta(1), epsilon(1), plus the additional subunit P18 (Tb427.05.1710) that is not present in F(1)F(o) ATP synthase from metazoa. Subunit P18 (Tb927.5.1710) interacts with the alpha subunit with a 1:1 stoichiometry; the interaction is direct. Subunit gamma is part of the central stalk. F(o) has three main subunits: a, b and c. The trypanosomal ATPase complex contains additional subunits that are not present in the F(1)F(o) ATP synthase from metazoa.

The protein localises to the mitochondrion. Its subcellular location is the mitochondrion inner membrane. Mitochondrial membrane ATP synthase (F(1)F(o) ATP synthase) produces ATP from ADP in the presence of a proton gradient across the membrane which is generated by electron transport complexes of the respiratory chain. F-type ATPases consist of two structural domains, F(1) - containing the extramembraneous catalytic core, and F(o) - containing the membrane proton channel, linked together by a central stalk and a peripheral stalk. During catalysis, ATP synthesis in the catalytic domain of F(1) is coupled via a rotary mechanism of the central stalk subunits to proton translocation. Subunits alpha and beta form the catalytic core in F(1). Rotation of the central stalk against the surrounding alpha(3)beta(3) subunits leads to hydrolysis of ATP in three separate catalytic sites on the beta subunits. Contrary to the procyclic, insect form that requires F(1)F(o) ATP synthase for ATP synthesis, the bloodstream form relies on ATP hydrolysis by F(1)F(o) ATP synthase to maintain its mitochondrial membrane potential. In Trypanosoma brucei brucei, this protein is ATP synthase subunit gamma, mitochondrial.